A 108-amino-acid polypeptide reads, in one-letter code: UPF0145 protein THA_1434 (108 aa).

Belongs to the UPF0145 family.

This Thermosipho africanus (strain TCF52B) protein is UPF0145 protein THA_1434.